A 212-amino-acid chain; its full sequence is Adenylate kinase (212 aa).

10–15 (GAGKGT) contributes to the ATP binding site. The interval 30–59 (STGDMFRAAMANQTEMGRLAKSYIDKGELV) is NMP. AMP-binding positions include threonine 31, arginine 36, 57 to 59 (ELV), 86 to 89 (GYPR), and glutamine 93. An LID region spans residues 127-159 (GRIINRKTGETFHKVFNPPVDYKEEDYYQREDD). ATP-binding positions include arginine 128 and 137 to 138 (TF). Arginine 156 and arginine 167 together coordinate AMP. Glutamine 195 contributes to the ATP binding site.

This sequence belongs to the adenylate kinase family. Monomer.

The protein resides in the cytoplasm. The enzyme catalyses AMP + ATP = 2 ADP. The protein operates within purine metabolism; AMP biosynthesis via salvage pathway; AMP from ADP: step 1/1. Functionally, catalyzes the reversible transfer of the terminal phosphate group between ATP and AMP. Plays an important role in cellular energy homeostasis and in adenine nucleotide metabolism. This is Adenylate kinase from Streptococcus agalactiae serotype III (strain NEM316).